The following is a 151-amino-acid chain: Cytochrome c-type biogenesis protein CcmE (151 aa).

Residues 1–9 (MKGLKKKRR) are Cytoplasmic-facing. A helical; Signal-anchor for type II membrane protein transmembrane segment spans residues 10 to 30 (IQIITLAFVALAGSTALIGYA). The Periplasmic segment spans residues 31 to 151 (MRDGINFFRS…FQHTEDQPQG (121 aa)). Residues histidine 123 and tyrosine 127 each contribute to the heme site.

This sequence belongs to the CcmE/CycJ family.

Its subcellular location is the cell inner membrane. Functionally, heme chaperone required for the biogenesis of c-type cytochromes. Transiently binds heme delivered by CcmC and transfers the heme to apo-cytochromes in a process facilitated by CcmF and CcmH. In Cereibacter sphaeroides (strain ATCC 17025 / ATH 2.4.3) (Rhodobacter sphaeroides), this protein is Cytochrome c-type biogenesis protein CcmE.